Consider the following 264-residue polypeptide: Apolipoprotein A-I (264 aa).

The first 18 residues, M1 to A18, serve as a signal peptide directing secretion. Tandem repeats lie at residues L67–G88 and L89–S110. Residues L67–Q264 are 10 X approximate tandem repeats. The 3; half-length repeat unit spans residues E111 to Q121. 3 tandem repeats follow at residues P122–R143, P144–T165, and P166–A187. Residues P188–S207 form a 7; truncated repeat. Residue M193 is modified to Methionine sulfoxide. Repeat 8 spans residues A208 to K229. A 9; half-length repeat occupies P230 to L240. The stretch at P241–Q264 is repeat 10.

The protein belongs to the apolipoprotein A1/A4/E family. Homodimer. Interacts with APOA1BP and CLU. Component of a sperm activating protein complex (SPAP), consisting of APOA1, an immunoglobulin heavy chain, an immunoglobulin light chain and albumin. Interacts with NDRG1. Interacts with SCGB3A2. Interacts with NAXE and YJEFN3. Glycosylated. In terms of processing, palmitoylated. Post-translationally, phosphorylation sites are present in the extracellular medium.

The protein resides in the secreted. Functionally, participates in the reverse transport of cholesterol from tissues to the liver for excretion by promoting cholesterol efflux from tissues and by acting as a cofactor for the lecithin cholesterol acyltransferase (LCAT). As part of the SPAP complex, activates spermatozoa motility. This is Apolipoprotein A-I (APOA1) from Cavia aperea (Brazilian guinea pig).